Here is a 799-residue protein sequence, read N- to C-terminus: Integrin beta-1 (799 aa).

Residues 1–20 (MNLQLVFWIGLISLICSVFG) form the signal peptide. Residues 21 to 729 (QTDKNRCLKA…ETPDCPTGPD (709 aa)) lie on the Extracellular side of the membrane. The PSI domain occupies 26–76 (RCLKANAKSCGECIQAGPNCGWCTNTTFLQEGMPTSARCDDLEALKKKGCH). Cystine bridges form between cysteine 27–cysteine 45, cysteine 35–cysteine 465, cysteine 38–cysteine 64, cysteine 48–cysteine 75, cysteine 207–cysteine 213, cysteine 261–cysteine 301, cysteine 401–cysteine 415, cysteine 435–cysteine 463, cysteine 467–cysteine 487, cysteine 478–cysteine 490, cysteine 492–cysteine 501, cysteine 503–cysteine 534, cysteine 517–cysteine 532, cysteine 526–cysteine 537, cysteine 539–cysteine 554, cysteine 556–cysteine 577, cysteine 561–cysteine 575, cysteine 569–cysteine 580, cysteine 582–cysteine 591, cysteine 593–cysteine 616, cysteine 600–cysteine 614, cysteine 608–cysteine 619, cysteine 621–cysteine 631, cysteine 634–cysteine 637, cysteine 641–cysteine 692, cysteine 647–cysteine 666, cysteine 650–cysteine 662, and cysteine 700–cysteine 724. N-linked (GlcNAc...) asparagine glycosylation is found at asparagine 50, asparagine 94, and asparagine 97. Residues 140 to 378 (DYPIDLYYLM…QLIIDAYNSL (239 aa)) form the VWFA domain. 2 residues coordinate Mg(2+): serine 152 and serine 154. Positions 154, 157, 158, and 189 each coordinate Ca(2+). The segment at 207-213 (CTSEQNC) is CX3CL1-binding. N-linked (GlcNAc...) asparagine glycosylation is present at asparagine 212. 4 residues coordinate Ca(2+): asparagine 244, aspartate 246, proline 248, and glutamate 249. Residue glutamate 249 participates in Mg(2+) binding. Asparagine 269 carries N-linked (GlcNAc...) asparagine glycosylation. Positions 295–314 (LPNDGQCHLENNVYTMSHYY) are CX3CL1-binding. Ca(2+) is bound at residue glycine 362. 3 N-linked (GlcNAc...) asparagine glycosylation sites follow: asparagine 363, asparagine 406, and asparagine 417. The segment at 383 to 466 (ILENSKLPDG…VVLQFICKCN (84 aa)) is interaction with TMEM182. 4 consecutive I-EGF domains span residues 467–502 (CQSH…RHCE), 503–555 (CSTD…KFCE), 556–592 (CDNF…SACD), and 593–632 (CSLD…PTCE). A glycan (N-linked (GlcNAc...) asparagine) is linked at asparagine 482. A glycan (N-linked (GlcNAc...) asparagine) is linked at asparagine 521. Asparagine 585 carries N-linked (GlcNAc...) asparagine glycosylation. The N-linked (GlcNAc...) asparagine glycan is linked to asparagine 670. A helical membrane pass occupies residues 730-752 (IIPIVAGVVAGIVLIGLALLLIW). Residues 753–799 (KLLMIIHDRREFAKFEKEKMNAKWDTGENPIYKSAVTTVVNPKYEGK) lie on the Cytoplasmic side of the membrane. The segment at 763–768 (EFAKFE) is signal for sorting from recycling endosomes; interaction with ACAP1. Position 778 is a phosphothreonine (threonine 778). A Phosphotyrosine modification is found at tyrosine 784. Position 786 is a phosphoserine (serine 786). The interval 786–793 (SAVTTVVN) is interaction with ITGB1BP1. Threonine 790 is modified (phosphothreonine). At lysine 795 the chain carries N6-acetyllysine; alternate. Lysine 795 participates in a covalent cross-link: Glycyl lysine isopeptide (Lys-Gly) (interchain with G-Cter in SUMO1); alternate.

This sequence belongs to the integrin beta chain family. In terms of assembly, interacts with seprase FAP (seprase); the interaction occurs at the cell surface of invadopodia membrane in a collagen-dependent manner. Heterodimer of an alpha and a beta subunit. Beta-1 associates with either alpha-1, alpha-2, alpha-3, alpha-4, alpha-5, alpha-6, alpha-7, alpha-8, alpha-9, alpha-10, alpha-11 or alpha-V. ITGA6:ITGB1 is found in a complex with CD9; interaction takes place in oocytes and is involved in sperm-egg fusion. Binds LGALS3BP and NMRK2, when associated with alpha-7, but not with alpha-5. Interacts with FLNA, FLNB, FLNC and RANBP9. Interacts with KRT1 in the presence of RACK1 and SRC. Interacts with JAML; integrin alpha-4/beta-1 may regulate leukocyte to endothelial cells adhesion by controlling JAML homodimerization. Interacts with RAB21. Interacts (via the cytoplasmic region) with RAB25 (via the hypervariable C-terminal region). Interacts with MYO10. Interacts with ITGB1BP1 (via C-terminal region); the interaction is a prerequisite for focal adhesion disassembly. Interacts with TLN1; the interaction is prevented by competitive binding of ITGB1BP1. Interacts with ACAP1; required for ITGB1 recycling. Interacts with ASAP3. Interacts with FERMT2; the interaction is inhibited in presence of ITGB1BP1. Interacts with DAB2. Interacts with FGR and HCK. Interacts with alpha-7A and alpha-7B in adult skeletal muscle. Interacts with alpha-7B in cardiomyocytes of adult heart. Interacts with EMP2; the interaction may be direct or indirect and ITGB1 has a heterodimer form. ITGA5:ITGB1 interacts with CCN3. ITGA4:ITGB1 is found in a ternary complex with CX3CR1 and CX3CL1. ITGA5:ITGB1 interacts with FBN1. ITGA5:ITGB1 acts as a receptor for fibronectin FN1 and mediates R-G-D-dependent cell adhesion to FN1. ITGA5:ITGB1 interacts with IL1B. Interacts with MDK. ITGA4:ITGB1 interacts with MDK; this interaction mediates MDK-induced osteoblast cells migration through PXN phosphorylation. ITGA6:ITGB1 interacts with MDK; this interaction mediates MDK-induced neurite-outgrowth. ITGA5:ITGB1 interacts with ACE2. Interacts with TMEM182 and LAMB1. Interacts with tensin TNS3; TNS3 also interacts with PEAK1, thus acting as an adapter molecule to bridge the association of PEAK1 with ITGB1. Interacts with tensin TNS4; the interaction displaces tensin TNS3 from the ITGB1 cytoplasmic tail and promotes ITGB1 stability. Integrin ITGA9:ITGB1 interacts with SPP1/OPN (via N-terminus). Integrin ITGA9:ITGB1 interacts with TNC/TNFN3 (via the 3rd Fibronectin type-III domain). Integrins ITGA4:ITGB1 and ITGA9:ITGB1 interact with SVEP1 (via Sushi domain 21); thereby inhibit Ca(2+) intracellular signaling and as a result repress vasocontraction. ITGA4:ITGB1 and ITGA5:ITGB1 interacts with SELP. ITGA5:ITGB1 interacts with IGFBP1. ITGA4:ITGB1 interacts with BCAM. Interacts with ADGRG6.

It localises to the cell membrane. Its subcellular location is the cell projection. It is found in the invadopodium membrane. The protein resides in the ruffle membrane. The protein localises to the recycling endosome. It localises to the melanosome. Its subcellular location is the lamellipodium. It is found in the ruffle. The protein resides in the cell junction. The protein localises to the focal adhesion. In terms of biological role, integrins alpha-1/beta-1, alpha-2/beta-1, alpha-10/beta-1 and alpha-11/beta-1 are receptors for collagen. Integrins alpha-1/beta-1 and alpha-2/beta-2 recognize the proline-hydroxylated sequence G-F-P-G-E-R in collagen. Integrins alpha-2/beta-1, alpha-3/beta-1, alpha-4/beta-1, alpha-5/beta-1, alpha-8/beta-1, alpha-10/beta-1, alpha-11/beta-1 and alpha-V/beta-1 are receptors for fibronectin. Alpha-4/beta-1 recognizes one or more domains within the alternatively spliced CS-1 and CS-5 regions of fibronectin. Integrin alpha-5/beta-1 is a receptor for fibrinogen. Integrin alpha-1/beta-1, alpha-2/beta-1, alpha-6/beta-1 and alpha-7/beta-1 are receptors for lamimin. Integrin alpha-6/beta-1 (ITGA6:ITGB1) is present in oocytes and is involved in sperm-egg fusion. Integrin alpha-4/beta-1 is a receptor for VCAM1 and recognizes the sequence Q-I-D-S in VCAM1. Integrin alpha-9/beta-1 is a receptor for VCAM1, cytotactin and osteopontin. It recognizes the sequence A-E-I-D-G-I-E-L in cytotactin. Integrin alpha-3/beta-1 is a receptor for epiligrin, thrombospondin and CSPG4. Integrin alpha-3/beta-1 provides a docking site for FAP (seprase) at invadopodia plasma membranes in a collagen-dependent manner and hence may participate in the adhesion, formation of invadopodia and matrix degradation processes, promoting cell invasion. Alpha-3/beta-1 may mediate with LGALS3 the stimulation by CSPG4 of endothelial cells migration. Integrin alpha-V/beta-1 is a receptor for vitronectin. Beta-1 integrins recognize the sequence R-G-D in a wide array of ligands. When associated with alpha-7/beta-1 integrin, regulates cell adhesion and laminin matrix deposition. Involved in promoting endothelial cell motility and angiogenesis. Involved in osteoblast compaction through the fibronectin fibrillogenesis cell-mediated matrix assembly process and the formation of mineralized bone nodules. May be involved in up-regulation of the activity of kinases such as PKC via binding to KRT1. Together with KRT1 and RACK1, serves as a platform for SRC activation or inactivation. Plays a mechanistic adhesive role during telophase, required for the successful completion of cytokinesis. ITGA4:ITGB1 binds to fractalkine (CX3CL1) and may act as its coreceptor in CX3CR1-dependent fractalkine signaling. ITGA4:ITGB1 and ITGA5:ITGB1 bind to PLA2G2A via a site (site 2) which is distinct from the classical ligand-binding site (site 1) and this induces integrin conformational changes and enhanced ligand binding to site 1. ITGA5:ITGB1 acts as a receptor for fibrillin-1 (FBN1) and mediates R-G-D-dependent cell adhesion to FBN1. ITGA5:ITGB1 is a receptor for IL1B and binding is essential for IL1B signaling. ITGA5:ITGB3 is a receptor for soluble CD40LG and is required for CD40/CD40LG signaling. Plays an important role in myoblast differentiation and fusion during skeletal myogenesis. ITGA9:ITGB1 may play a crucial role in SVEP1/polydom-mediated myoblast cell adhesion. Integrins ITGA9:ITGB1 and ITGA4:ITGB1 repress PRKCA-mediated L-type voltage-gated channel Ca(2+) influx and ROCK-mediated calcium sensitivity in vascular smooth muscle cells via their interaction with SVEP1, thereby inhibit vasocontraction. This is Integrin beta-1 (Itgb1) from Rattus norvegicus (Rat).